Reading from the N-terminus, the 326-residue chain is NADH-quinone oxidoreductase subunit H (326 aa).

Transmembrane regions (helical) follow at residues Ile11 to Phe31, Val81 to Val101, Ile114 to Gly134, Leu154 to Phe174, Leu186 to Val206, Phe237 to Phe257, Leu265 to Ile285, and Trp302 to Trp322.

The protein belongs to the complex I subunit 1 family. In terms of assembly, NDH-1 is composed of 13 different subunits. Subunits NuoA, H, J, K, L, M, N constitute the membrane sector of the complex.

The protein resides in the cell inner membrane. The enzyme catalyses a quinone + NADH + 5 H(+)(in) = a quinol + NAD(+) + 4 H(+)(out). In terms of biological role, NDH-1 shuttles electrons from NADH, via FMN and iron-sulfur (Fe-S) centers, to quinones in the respiratory chain. The immediate electron acceptor for the enzyme in this species is believed to be ubiquinone. Couples the redox reaction to proton translocation (for every two electrons transferred, four hydrogen ions are translocated across the cytoplasmic membrane), and thus conserves the redox energy in a proton gradient. This subunit may bind ubiquinone. This chain is NADH-quinone oxidoreductase subunit H, found in Cronobacter sakazakii (strain ATCC BAA-894) (Enterobacter sakazakii).